A 360-amino-acid chain; its full sequence is MASTSFFPPRPSSTLAEIASLTKATLVDASYAEHRITGLASLDEAGPMHLSFFENLRYSDELANTRAGACLVSERFEGRVPSHVAVLRARRPFHAFVAYARHLYSDALRPHTGVGAPGIAPTAVIHETAKLEDEVTVEPLAVIGPDVEIGSGTVIGAGAVIAAGVKIGRDCDIGAGSHLQHALIGNNVLMHPGCHIGQDGFGFIFAGQHTKVPQTGRVIIQHDVELGAGTTIDRGSLRDTVIGEGTKIDNQVQIGHNVTIGRHCVIAAKCGLAGSLTLGDNVALGAMVGINNHVVIGDGAQVAAMSGVKDSIPAGERWGGIFARPTRTWFREMLAVRRLAEGSGAETAARPDDDRDEGRG.

H256 (proton acceptor) is an active-site residue. The interval 341–360 (EGSGAETAARPDDDRDEGRG) is disordered. Positions 349–360 (ARPDDDRDEGRG) are enriched in basic and acidic residues.

Belongs to the transferase hexapeptide repeat family. LpxD subfamily. As to quaternary structure, homotrimer.

It carries out the reaction a UDP-3-O-[(3R)-3-hydroxyacyl]-alpha-D-glucosamine + a (3R)-hydroxyacyl-[ACP] = a UDP-2-N,3-O-bis[(3R)-3-hydroxyacyl]-alpha-D-glucosamine + holo-[ACP] + H(+). It participates in bacterial outer membrane biogenesis; LPS lipid A biosynthesis. Its function is as follows. Catalyzes the N-acylation of UDP-3-O-acylglucosamine using 3-hydroxyacyl-ACP as the acyl donor. Is involved in the biosynthesis of lipid A, a phosphorylated glycolipid that anchors the lipopolysaccharide to the outer membrane of the cell. This Rhodopseudomonas palustris (strain ATCC BAA-98 / CGA009) protein is UDP-3-O-acylglucosamine N-acyltransferase.